The following is a 122-amino-acid chain: Small ribosomal subunit protein bS16 (122 aa).

The disordered stretch occupies residues 81 to 122 (GLMKRDAKNNPKKGEPGEKAKERAKERAEKAAAGSTEDAAAE). Residues 83-110 (MKRDAKNNPKKGEPGEKAKERAKERAEK) show a composition bias toward basic and acidic residues. Residues 111-122 (AAAGSTEDAAAE) are compositionally biased toward low complexity.

Belongs to the bacterial ribosomal protein bS16 family.

This chain is Small ribosomal subunit protein bS16, found in Xanthobacter autotrophicus (strain ATCC BAA-1158 / Py2).